The primary structure comprises 20 residues: Cytochrome P450IIB (20 aa).

This sequence belongs to the cytochrome P450 family. Heme serves as cofactor.

It localises to the endoplasmic reticulum membrane. The protein resides in the microsome membrane. The catalysed reaction is an organic molecule + reduced [NADPH--hemoprotein reductase] + O2 = an alcohol + oxidized [NADPH--hemoprotein reductase] + H2O + H(+). Cytochromes P450 are a group of heme-thiolate monooxygenases. In liver microsomes, this enzyme is involved in an NADPH-dependent electron transport pathway. This isozyme is active upon P.nitroanisole, aniline, D-benzphetamine, delta(9)-tetrahydrocannabinol (THC) and strychnine. The chain is Cytochrome P450IIB from Cavia porcellus (Guinea pig).